The following is a 1857-amino-acid chain: Fer-1-like protein 6 (1857 aa).

At 1 to 1824 the chain is on the cytoplasmic side; sequence MFGLKVKKKR…YLIWKNYKKY (1824 aa). Residues 15–63 form a disordered region; that stretch reads KGLILANKAAKDSQGDTEALQEEPSHQEGPRGDLVHDDASIFPVPSASP. The span at 37 to 53 shows a compositional bias: basic and acidic residues; sequence EPSHQEGPRGDLVHDDA. C2 domains lie at 65–181 and 225–356; these read RRSK…QFCN and PIEK…DKGF. The span at 426–447 shows a compositional bias: basic and acidic residues; sequence SKDKDSKSSKGKDKADKTEDGK. The interval 426–469 is disordered; the sequence is SKDKDSKSSKGKDKADKTEDGKSQQASNKTNSTEVEVESFDVPP. Residues 448–459 show a composition bias toward polar residues; the sequence is SQQASNKTNSTE. C2 domains lie at 810-937 and 969-1099; these read GTNH…RLCY and PVEP…LAPI. Ca(2+) contacts are provided by D842, D848, D904, and D906. Disordered regions lie at residues 1101–1148, 1161–1203, and 1224–1246; these read QVDG…VVPD, PDSS…RTIA, and AQKAKERNPKGKKGNTEAKPDEV. The segment covering 1113 to 1129 has biased composition (polar residues); that stretch reads DSLTATESSGAHSSSQD. The span at 1178–1189 shows a compositional bias: basic and acidic residues; sequence PPKDGKPKDPRK. Positions 1190 to 1200 are enriched in basic residues; it reads PSRRSTKRRKR. The span at 1226–1245 shows a compositional bias: basic and acidic residues; sequence KAKERNPKGKKGNTEAKPDE. C2 domains follow at residues 1338–1457 and 1578–1729; these read DSGQ…AICG and DMPQ…KACD. Ca(2+) contacts are provided by D1372, D1378, D1427, D1429, and D1435. The helical transmembrane segment at 1825–1845 threads the bilayer; sequence IIIAFILIILIIFLVLFIYTL. The Extracellular segment spans residues 1846–1857; the sequence is PGAISRRIVVGS.

Belongs to the ferlin family. Ca(2+) serves as cofactor.

It localises to the membrane. This is Fer-1-like protein 6 (FER1L6) from Homo sapiens (Human).